The chain runs to 398 residues: Na(+)/H(+) antiporter NhaA (398 aa).

Transmembrane regions (helical) follow at residues 21–41, 56–76, 94–114, 124–144, 153–173, 176–196, 201–221, 263–283, 284–304, 306–326, 333–353, and 367–387; these read AGGIILMVAAALALIVANSPL, LSVSHWVNDGLMAVFFLLVGL, VLPGIAAAGGMLVPALVYVFI, GWAIPTATDIAFALGVLSLLG, VFLTALAIIDDLGAVIIIAIF, SGLSLAYLGAAFAVIAALVVL, VMTLLPYLVLGAILWVLVLKS, IVPFFVIPIFGFANAGVSLAG, LSLGALIEPLTLGVAAGLVVG, LVGVFGSSALAIRLGLADLPA, MIGISLLCGIGFTMSLFIGLL, and VGILAGSFVAAILGAAVLLMA.

Belongs to the NhaA Na(+)/H(+) (TC 2.A.33) antiporter family.

The protein resides in the cell inner membrane. It catalyses the reaction Na(+)(in) + 2 H(+)(out) = Na(+)(out) + 2 H(+)(in). Na(+)/H(+) antiporter that extrudes sodium in exchange for external protons. The sequence is that of Na(+)/H(+) antiporter NhaA from Mesorhizobium japonicum (strain LMG 29417 / CECT 9101 / MAFF 303099) (Mesorhizobium loti (strain MAFF 303099)).